Here is a 2141-residue protein sequence, read N- to C-terminus: Oxygen-regulated protein 1 (2141 aa).

Residues 1-10 (MSETSSTSVS) show a composition bias toward polar residues. Positions 1–20 (MSETSSTSVSMIHRSFEGQG) are disordered. Residues 34-116 (KKISFYKSGD…RRKVQPVDLD (83 aa)) form the Doublecortin 1 domain. Residues 126-149 (LSSRAISAHAQRSPPTSIGAAGAP) are disordered. In terms of domain architecture, Doublecortin 2 spans 156-235 (RRLLVFRNGD…REPFKPGNYD (80 aa)). 3 disordered regions span residues 259 to 278 (RSES…SQIY), 1432 to 1458 (YTSS…SSER), and 1589 to 1612 (DWSE…GPNG). Over residues 268–278 (HVPSSPRSQIY) the composition is skewed to polar residues. Over residues 1435-1444 (SDKEDSKTSE) the composition is skewed to basic and acidic residues. Composition is skewed to polar residues over residues 1448-1458 (SITNSMTSSER) and 1598-1610 (ENEQ…SDGP).

As to quaternary structure, interacts (via the doublecortin domains) with microtubules. Interacts with RP1L1. Interacts with MAK.

The protein localises to the cytoplasm. Its subcellular location is the cytoskeleton. It localises to the cilium axoneme. It is found in the cell projection. The protein resides in the cilium. The protein localises to the photoreceptor outer segment. Its function is as follows. Microtubule-associated protein regulating the stability and length of the microtubule-based axoneme of photoreceptors. Required for the differentiation of photoreceptor cells, it plays a role in the organization of the outer segment of rod and cone photoreceptors ensuring the correct orientation and higher-order stacking of outer segment disks along the photoreceptor axoneme. The chain is Oxygen-regulated protein 1 (RP1) from Canis lupus familiaris (Dog).